Consider the following 178-residue polypeptide: Ribosomal RNA small subunit methyltransferase G (178 aa).

Residues glycine 54, leucine 59, 105–106 (LE), and arginine 120 each bind S-adenosyl-L-methionine.

It belongs to the methyltransferase superfamily. RNA methyltransferase RsmG family.

It localises to the cytoplasm. The catalysed reaction is guanosine(527) in 16S rRNA + S-adenosyl-L-methionine = N(7)-methylguanosine(527) in 16S rRNA + S-adenosyl-L-homocysteine. In terms of biological role, specifically methylates the N7 position of guanine in position 527 of 16S rRNA. The sequence is that of Ribosomal RNA small subunit methyltransferase G from Helicobacter pylori (strain ATCC 700392 / 26695) (Campylobacter pylori).